We begin with the raw amino-acid sequence, 539 residues long: Chaperonin GroEL (539 aa).

Residues 30–33 (TLGP), 87–91 (DGTTT), glycine 414, 479–481 (DAL), and aspartate 495 each bind ATP.

This sequence belongs to the chaperonin (HSP60) family. In terms of assembly, forms a cylinder of 14 subunits composed of two heptameric rings stacked back-to-back. Interacts with the co-chaperonin GroES.

The protein resides in the cytoplasm. It catalyses the reaction ATP + H2O + a folded polypeptide = ADP + phosphate + an unfolded polypeptide.. Functionally, together with its co-chaperonin GroES, plays an essential role in assisting protein folding. The GroEL-GroES system forms a nano-cage that allows encapsulation of the non-native substrate proteins and provides a physical environment optimized to promote and accelerate protein folding. The sequence is that of Chaperonin GroEL from Caldicellulosiruptor bescii (strain ATCC BAA-1888 / DSM 6725 / KCTC 15123 / Z-1320) (Anaerocellum thermophilum).